The primary structure comprises 331 residues: Ferredoxin--NADP reductase 2 (331 aa).

FAD is bound by residues Glu37, Gln45, Tyr50, Val90, Phe124, Asp286, and Thr327.

This sequence belongs to the ferredoxin--NADP reductase type 2 family. Homodimer. Requires FAD as cofactor.

It catalyses the reaction 2 reduced [2Fe-2S]-[ferredoxin] + NADP(+) + H(+) = 2 oxidized [2Fe-2S]-[ferredoxin] + NADPH. The sequence is that of Ferredoxin--NADP reductase 2 from Listeria welshimeri serovar 6b (strain ATCC 35897 / DSM 20650 / CCUG 15529 / CIP 8149 / NCTC 11857 / SLCC 5334 / V8).